A 348-amino-acid chain; its full sequence is Phosphate acyltransferase (348 aa).

The protein belongs to the PlsX family. In terms of assembly, homodimer. Probably interacts with PlsY.

Its subcellular location is the cytoplasm. It carries out the reaction a fatty acyl-[ACP] + phosphate = an acyl phosphate + holo-[ACP]. Its pathway is lipid metabolism; phospholipid metabolism. Its function is as follows. Catalyzes the reversible formation of acyl-phosphate (acyl-PO(4)) from acyl-[acyl-carrier-protein] (acyl-ACP). This enzyme utilizes acyl-ACP as fatty acyl donor, but not acyl-CoA. This is Phosphate acyltransferase from Leuconostoc citreum (strain KM20).